The primary structure comprises 363 residues: MNPKTYEALETMQKRVDQIDKDLQSEEIVSDVKKMLELNKERANLIEVVEKFIEYKTIIQSIADAKEILGNEKDAEMIELAKMELSENEDAVEPIVAIIEELLLPKDPNDDKNVIVEIRGAAGGDEANIFAGDLLRMYKLYAETQNWKITMLDANSSEAGGFSQVSFMVKGDRVYSKLKFESGAHRVQRVPKTEAKGRIQTSTATVAVLPEMSDVEIEIKNSDLRIDTYRSSGAGGQHVNTTDSAVRITHIPTGVVAASQDGRSQHDNKDIAMTMLRARIYEAELEKQQAEADATRKNAVGTGARSEKIRTYNYPQNRVTDHRVGLTLNKLDQVMEGKIDDFIIALVNDEQRQKVEAQLQDNE.

Q237 carries the post-translational modification N5-methylglutamine.

The protein belongs to the prokaryotic/mitochondrial release factor family. Post-translationally, methylated by PrmC. Methylation increases the termination efficiency of RF1.

The protein resides in the cytoplasm. Functionally, peptide chain release factor 1 directs the termination of translation in response to the peptide chain termination codons UAG and UAA. The protein is Peptide chain release factor 1 of Mesoplasma florum (strain ATCC 33453 / NBRC 100688 / NCTC 11704 / L1) (Acholeplasma florum).